Here is a 221-residue protein sequence, read N- to C-terminus: UPF0758 protein CGSHiEE_07200 (221 aa).

One can recognise an MPN domain in the interval 99–221 (IINDPETVKL…CYSFAENCLL (123 aa)). The Zn(2+) site is built by His-170, His-172, and Asp-183. Residues 170-183 (HNHPSGVTEPSYSD) carry the JAMM motif motif.

This sequence belongs to the UPF0758 family.

This Haemophilus influenzae (strain PittEE) protein is UPF0758 protein CGSHiEE_07200.